Here is a 165-residue protein sequence, read N- to C-terminus: Neuritin-like protein (165 aa).

An N-terminal signal peptide occupies residues 1 to 35; sequence MMRCCRRRCCCRQPPHALRPLLLLPLVLLPPLAAA. A lipid anchor (GPI-anchor amidated alanine) is attached at Ala-139. Positions 140 to 165 are cleaved as a propeptide — removed in mature form; that stretch reads PALPMAPAPPLLAAALALAYLLRPLA.

It belongs to the neuritin family.

The protein resides in the cell membrane. The protein is Neuritin-like protein (NRN1L) of Homo sapiens (Human).